The following is a 159-amino-acid chain: UPF0699 transmembrane protein YdbS (159 aa).

The next 2 helical transmembrane spans lie at 22-42 (IIISAVCLLIVIAVAVLSYYF) and 47-67 (WISGVLGAVWLLGSIVTVFII).

It belongs to the UPF0699 family.

The protein localises to the cell membrane. The polypeptide is UPF0699 transmembrane protein YdbS (ydbS) (Bacillus subtilis (strain 168)).